Here is a 364-residue protein sequence, read N- to C-terminus: Paraneoplastic antigen Ma2 homolog (364 aa).

A2 carries the post-translational modification N-acetylalanine. The span at E335–D353 shows a compositional bias: acidic residues. Residues E335–D364 are disordered.

Belongs to the PNMA family.

The protein resides in the nucleus. Its subcellular location is the nucleolus. This Pongo abelii (Sumatran orangutan) protein is Paraneoplastic antigen Ma2 homolog (PNMA2).